The chain runs to 1393 residues: RNA polymerase II-associated protein 1 (1393 aa).

3 disordered regions span residues 34 to 53 (KKGNRGGGDANSDRPPLQDH), 61 to 94 (NLPDLPPALVPSPPKRARPSPGHCLPEDEDPEER), and 266 to 295 (SHTQEQTGETASEEQRPGGPSANVTKEEPL). The span at 64–74 (DLPPALVPSPP) shows a compositional bias: pro residues. Ser72 is modified (phosphoserine). Thr321 is subject to Phosphothreonine. The interval 496–531 (PSQEDKEDEDEDEECPAGKAKRKSPEEESRPPPDLA) is disordered. Residues 500-510 (DKEDEDEDEEC) show a composition bias toward acidic residues. The segment covering 518–531 (KSPEEESRPPPDLA) has biased composition (basic and acidic residues). Position 1121 is a phosphoserine (Ser1121).

This sequence belongs to the RPAP1 family. In terms of assembly, part of an RNA polymerase II complex that contains POLR2A, POLR2B, POLR2C, POLR2D, POLR2E, POLR2F, POLR2G, POLR2H, POLR2I, POLR2J, POLR2K, POLR2L, RPAP1, FCP1 plus the general transcription factors TFIIB and TFIIF.

It is found in the nucleus. Its function is as follows. Forms an interface between the RNA polymerase II enzyme and chaperone/scaffolding protein, suggesting that it is required to connect RNA polymerase II to regulators of protein complex formation. Required for interaction of the RNA polymerase II complex with acetylated histone H3. In Homo sapiens (Human), this protein is RNA polymerase II-associated protein 1 (RPAP1).